We begin with the raw amino-acid sequence, 101 residues long: A-type ATP synthase subunit K (101 aa).

Transmembrane regions (helical) follow at residues 4 to 24 (ALLI…AAQA), 32 to 52 (FMGI…GAGV), and 75 to 95 (VLIF…FAVL).

The protein belongs to the V-ATPase proteolipid subunit family. Has multiple subunits with at least A(3), B(3), C, D, E, F, H, I and proteolipid K(x).

It is found in the cell membrane. Its function is as follows. Component of the A-type ATP synthase that produces ATP from ADP in the presence of a proton gradient across the membrane. This Sulfolobus acidocaldarius (strain ATCC 33909 / DSM 639 / JCM 8929 / NBRC 15157 / NCIMB 11770) protein is A-type ATP synthase subunit K.